Here is a 239-residue protein sequence, read N- to C-terminus: Outer membrane protein PagN (239 aa).

Residues 1-22 form the signal peptide; the sequence is MKNFFAVCIIPLVVAWSATASA. Over 23–26 the chain is Periplasmic; it reads KEGI. The beta stranded transmembrane segment at 27-36 threads the bilayer; sequence YITGKAGTSV. Residues 37 to 65 are Extracellular-facing; that stretch reads VNVYGINSTFSQDEIVNGHATLPDRTKGV. A beta stranded membrane pass occupies residues 66–76; sequence FGGGVAIGYDF. The Periplasmic portion of the chain corresponds to 77–81; sequence YDPFQ. Residues 82–92 traverse the membrane as a beta stranded segment; that stretch reads LPVRLELDTTF. Topologically, residues 93-120 are extracellular; that stretch reads RGETDAKGGQDIIAFGDPVHINVKNQVR. Residues 121-132 form a beta stranded membrane-spanning segment; sequence MTTYMVNGYYDF. At 133–137 the chain is on the periplasmic side; it reads HNSTA. The beta stranded transmembrane segment at 138 to 148 threads the bilayer; sequence FTPYISAGVGL. At 149–174 the chain is on the extracellular side; it reads AHVKLSNNTIPVGFGINETLSASKNN. Residues 175–185 form a beta stranded membrane-spanning segment; sequence FAWGAGIGAKY. Over 186-190 the chain is Periplasmic; the sequence is AVTDN. A beta stranded membrane pass occupies residues 191 to 200; that stretch reads IMIDASYKYI. Residues 201-230 are Extracellular-facing; that stretch reads NAGKVSISKNHYAGDEHTAYDADTKAASND. The chain crosses the membrane as a beta stranded span at residues 231 to 239; it reads FMLGITYAF.

It localises to the cell outer membrane. Haemagglutinin that facilitates the adhesion to and invasion of epithelial mammalian cells. Utilizes heparinated proteoglycan as a receptor to successfully invade host cells. The chain is Outer membrane protein PagN (pagN) from Salmonella typhimurium (strain LT2 / SGSC1412 / ATCC 700720).